A 375-amino-acid polypeptide reads, in one-letter code: Queuine tRNA-ribosyltransferase (375 aa).

The active-site Proton acceptor is the Asp89. Residues 89 to 93 (DSGGF), Asp143, Gln187, and Gly214 contribute to the substrate site. The segment at 245–251 (GVGKPED) is RNA binding. Asp264 serves as the catalytic Nucleophile. Positions 269-273 (TRNAR) are RNA binding; important for wobble base 34 recognition. The Zn(2+) site is built by Cys302, Cys304, Cys307, and His333.

It belongs to the queuine tRNA-ribosyltransferase family. As to quaternary structure, homodimer. Within each dimer, one monomer is responsible for RNA recognition and catalysis, while the other monomer binds to the replacement base PreQ1. Requires Zn(2+) as cofactor.

It carries out the reaction 7-aminomethyl-7-carbaguanine + guanosine(34) in tRNA = 7-aminomethyl-7-carbaguanosine(34) in tRNA + guanine. It functions in the pathway tRNA modification; tRNA-queuosine biosynthesis. Catalyzes the base-exchange of a guanine (G) residue with the queuine precursor 7-aminomethyl-7-deazaguanine (PreQ1) at position 34 (anticodon wobble position) in tRNAs with GU(N) anticodons (tRNA-Asp, -Asn, -His and -Tyr). Catalysis occurs through a double-displacement mechanism. The nucleophile active site attacks the C1' of nucleotide 34 to detach the guanine base from the RNA, forming a covalent enzyme-RNA intermediate. The proton acceptor active site deprotonates the incoming PreQ1, allowing a nucleophilic attack on the C1' of the ribose to form the product. After dissociation, two additional enzymatic reactions on the tRNA convert PreQ1 to queuine (Q), resulting in the hypermodified nucleoside queuosine (7-(((4,5-cis-dihydroxy-2-cyclopenten-1-yl)amino)methyl)-7-deazaguanosine). This Klebsiella pneumoniae subsp. pneumoniae (strain ATCC 700721 / MGH 78578) protein is Queuine tRNA-ribosyltransferase.